Reading from the N-terminus, the 812-residue chain is Valine--tRNA ligase (812 aa).

Positions 46–56 match the 'HIGH' region motif; the sequence is PTVSGQLHIGH. Positions 536–540 match the 'KMSKS' region motif; it reads KMSKS. Residue K539 participates in ATP binding.

It belongs to the class-I aminoacyl-tRNA synthetase family. ValS type 2 subfamily. Monomer.

The protein resides in the cytoplasm. It catalyses the reaction tRNA(Val) + L-valine + ATP = L-valyl-tRNA(Val) + AMP + diphosphate. In terms of biological role, catalyzes the attachment of valine to tRNA(Val). As ValRS can inadvertently accommodate and process structurally similar amino acids such as threonine, to avoid such errors, it has a 'posttransfer' editing activity that hydrolyzes mischarged Thr-tRNA(Val) in a tRNA-dependent manner. The polypeptide is Valine--tRNA ligase (Rickettsia bellii (strain RML369-C)).